Consider the following 137-residue polypeptide: Lysozyme (137 aa).

Residues 1–18 form the signal peptide; sequence MQKLIIFALVVLCVGSEA. The C-type lysozyme domain maps to 19–137; sequence KTFTRCGLVH…QGSLPDISSC (119 aa). Intrachain disulfides connect Cys24/Cys137, Cys45/Cys127, Cys79/Cys93, and Cys89/Cys107. Residues Glu50 and Asp67 contribute to the active site.

The protein belongs to the glycosyl hydrolase 22 family.

The catalysed reaction is Hydrolysis of (1-&gt;4)-beta-linkages between N-acetylmuramic acid and N-acetyl-D-glucosamine residues in a peptidoglycan and between N-acetyl-D-glucosamine residues in chitodextrins.. In terms of biological role, lysozymes have primarily a bacteriolytic function; those in tissues and body fluids are associated with the monocyte-macrophage system and enhance the activity of immunoagents. Active against E.coli and M.luteus. This is Lysozyme from Bombyx mori (Silk moth).